The following is a 117-amino-acid chain: Large ribosomal subunit protein bL20 (117 aa).

The protein belongs to the bacterial ribosomal protein bL20 family.

In terms of biological role, binds directly to 23S ribosomal RNA and is necessary for the in vitro assembly process of the 50S ribosomal subunit. It is not involved in the protein synthesizing functions of that subunit. This chain is Large ribosomal subunit protein bL20, found in Roseiflexus sp. (strain RS-1).